The chain runs to 245 residues: 1-(5-phosphoribosyl)-5-[(5-phosphoribosylamino)methylideneamino] imidazole-4-carboxamide isomerase (245 aa).

The Proton acceptor role is filled by Asp-7. Asp-129 serves as the catalytic Proton donor.

This sequence belongs to the HisA/HisF family.

Its subcellular location is the cytoplasm. It carries out the reaction 1-(5-phospho-beta-D-ribosyl)-5-[(5-phospho-beta-D-ribosylamino)methylideneamino]imidazole-4-carboxamide = 5-[(5-phospho-1-deoxy-D-ribulos-1-ylimino)methylamino]-1-(5-phospho-beta-D-ribosyl)imidazole-4-carboxamide. It participates in amino-acid biosynthesis; L-histidine biosynthesis; L-histidine from 5-phospho-alpha-D-ribose 1-diphosphate: step 4/9. The protein is 1-(5-phosphoribosyl)-5-[(5-phosphoribosylamino)methylideneamino] imidazole-4-carboxamide isomerase of Escherichia coli (strain SMS-3-5 / SECEC).